The chain runs to 620 residues: Kelch-like protein 32 (620 aa).

Residues 42–109 (CDITLIAEEQ…AYTGQILLEP (68 aa)) form the BTB domain. 6 Kelch repeats span residues 290-346 (TLYI…VMGD), 347-398 (FLFV…AMEE), 399-446 (YLYA…VADG), 447-494 (LLWI…AVQR), 496-547 (LYVL…VHNG), and 549-599 (IYLV…FLPA).

In Homo sapiens (Human), this protein is Kelch-like protein 32 (KLHL32).